A 457-amino-acid polypeptide reads, in one-letter code: Multidrug resistance protein MdtK (457 aa).

The next 12 helical transmembrane spans lie at 11-31, 46-66, 93-113, 127-147, 160-180, 188-208, 243-263, 278-300, 316-336, 350-370, 387-407, and 418-438; these read LLAL…MGVV, AVAV…GLLL, WLAF…DHII, AVGF…FQVL, GMVI…IFIY, LGGV…FLMM, LPVA…ALLV, LNFS…IRVG, YTSI…TVVF, VVVM…SDAI, IFFI…YLLG, and PSGF…LMAL.

The protein belongs to the multi antimicrobial extrusion (MATE) (TC 2.A.66.1) family. MdtK subfamily.

Its subcellular location is the cell inner membrane. Its function is as follows. Multidrug efflux pump that functions probably as a Na(+)/drug antiporter. The chain is Multidrug resistance protein MdtK from Yersinia enterocolitica serotype O:8 / biotype 1B (strain NCTC 13174 / 8081).